We begin with the raw amino-acid sequence, 260 residues long: Protein phosphatase 1 regulatory subunit 35 (260 aa).

Residues 1 to 100 (MMGFGASALE…PLLVAGAPGD (100 aa)) form a disordered region. Phosphoserine is present on residues S46 and S53. The span at 64–76 (RKGRRGGSRRGRQ) shows a compositional bias: basic residues.

This sequence belongs to the PPP1R35 family. As to quaternary structure, interacts with PPP1CA; this interaction mediates the PPP1CA phosphatase activity inhibition. Interacts with RTTN; this interaction allows the mutual recruitment to the centriole.

The protein resides in the cytoplasm. The protein localises to the cytoskeleton. It is found in the microtubule organizing center. Its subcellular location is the centrosome. It localises to the centriole. Functionally, during centriole duplication, plays a role in the centriole elongation by promoting the recruitment of the microtubule-binding elongation machinery through its interaction with TTTN, leading to the centriole to centrosome conversion. In addition may play a role in the primary cilia assembly. In Mus musculus (Mouse), this protein is Protein phosphatase 1 regulatory subunit 35.